Here is a 299-residue protein sequence, read N- to C-terminus: Leucine zipper transcription factor-like protein 1 (299 aa).

A coiled-coil region spans residues 88–296 (LAQAEKWYLK…DLRKRLAQYE (209 aa)). The segment at 145–299 (GTAELLNKEI…KRLAQYEPED (155 aa)) is interaction with BSS9.

It belongs to the LZTFL1 family. As to quaternary structure, self-associates. Interacts with BBS9; the interaction mediates the association of LZTL1 with the BBsome complex and regulates BBSome ciliary trafficking.

Its subcellular location is the cytoplasm. Its function is as follows. Regulates ciliary localization of the BBSome complex. Together with the BBSome complex, controls SMO ciliary trafficking and contributes to the sonic hedgehog (SHH) pathway regulation. May play a role in neurite outgrowth. May have tumor suppressor function. This is Leucine zipper transcription factor-like protein 1 (LZTFL1) from Macaca fascicularis (Crab-eating macaque).